Here is a 245-residue protein sequence, read N- to C-terminus: Ureidoacrylate amidohydrolase RutB (245 aa).

The Proton acceptor role is filled by Asp41. Residue Lys150 is part of the active site. Cys183 functions as the Nucleophile in the catalytic mechanism.

The protein belongs to the isochorismatase family. RutB subfamily.

It catalyses the reaction (Z)-3-ureidoacrylate + H2O + H(+) = (Z)-3-aminoacrylate + NH4(+) + CO2. It carries out the reaction (Z)-3-ureidoacrylate + H2O = (Z)-3-aminoacrylate + carbamate + H(+). The enzyme catalyses (Z)-2-methylureidoacrylate + H2O + H(+) = (Z)-2-methylaminoacrylate + NH4(+) + CO2. Functionally, hydrolyzes ureidoacrylate to form aminoacrylate and carbamate. The carbamate hydrolyzes spontaneously, thereby releasing one of the nitrogen atoms of the pyrimidine ring as ammonia and one of its carbon atoms as CO2. The chain is Ureidoacrylate amidohydrolase RutB from Pseudomonas savastanoi pv. phaseolicola (strain 1448A / Race 6) (Pseudomonas syringae pv. phaseolicola (strain 1448A / Race 6)).